Here is a 415-residue protein sequence, read N- to C-terminus: Homoserine O-succinyltransferase (415 aa).

The span at M1–R26 shows a compositional bias: polar residues. Residues M1–P27 are disordered. An AB hydrolase-1 domain is found at N71–D386. The Nucleophile role is filled by S177. R247 is a substrate binding site. Residues D346 and H379 contribute to the active site. D380 contributes to the substrate binding site.

The protein belongs to the AB hydrolase superfamily. MetX family. As to quaternary structure, homodimer.

The protein resides in the cytoplasm. It carries out the reaction L-homoserine + succinyl-CoA = O-succinyl-L-homoserine + CoA. Its pathway is amino-acid biosynthesis; L-methionine biosynthesis via de novo pathway; O-succinyl-L-homoserine from L-homoserine: step 1/1. Its function is as follows. Transfers a succinyl group from succinyl-CoA to L-homoserine, forming succinyl-L-homoserine. In Bordetella avium (strain 197N), this protein is Homoserine O-succinyltransferase.